A 797-amino-acid chain; its full sequence is G-patch domain-containing protein C1486.03 (797 aa).

A compositionally biased stretch (polar residues) spans 1 to 12; that stretch reads MQNEYVDMNSSS. Disordered regions lie at residues 1–33 and 159–204; these read MQNEYVDMNSSSEDSDGDSILEEGRLRPSFRGQ and VRER…SSEE. The region spanning 115-161 is the G-patch domain; that stretch reads TTGFGAKMLEKMGYKQGQGLGANAEGIAEPVQSKLRPERVGLGAVRE. Residues 159–185 show a composition bias toward basic and acidic residues; the sequence is VRERTEKQRKEAIARGEISDSEDEKHT. The span at 186–199 shows a compositional bias: basic residues; the sequence is VKQKPLREKKKKPL.

The protein belongs to the TFP11/STIP family.

It is found in the cytoplasm. The protein resides in the cytoskeleton. It localises to the microtubule organizing center. Its subcellular location is the spindle pole body. The chain is G-patch domain-containing protein C1486.03 from Schizosaccharomyces pombe (strain 972 / ATCC 24843) (Fission yeast).